A 188-amino-acid chain; its full sequence is Elongation factor P (188 aa).

Lys-34 is modified (N6-(3,6-diaminohexanoyl)-5-hydroxylysine).

Belongs to the elongation factor P family. May be beta-lysylated on the epsilon-amino group of Lys-34 by the combined action of EpmA and EpmB, and then hydroxylated on the C5 position of the same residue by EpmC (if this protein is present). Lysylation is critical for the stimulatory effect of EF-P on peptide-bond formation. The lysylation moiety may extend toward the peptidyltransferase center and stabilize the terminal 3-CCA end of the tRNA. Hydroxylation of the C5 position on Lys-34 may allow additional potential stabilizing hydrogen-bond interactions with the P-tRNA.

Its subcellular location is the cytoplasm. It functions in the pathway protein biosynthesis; polypeptide chain elongation. Functionally, involved in peptide bond synthesis. Alleviates ribosome stalling that occurs when 3 or more consecutive Pro residues or the sequence PPG is present in a protein, possibly by augmenting the peptidyl transferase activity of the ribosome. Modification of Lys-34 is required for alleviation. This chain is Elongation factor P, found in Haemophilus influenzae (strain 86-028NP).